A 110-amino-acid polypeptide reads, in one-letter code: Phosphoribosyl-ATP pyrophosphatase (110 aa).

Belongs to the PRA-PH family.

It localises to the cytoplasm. The catalysed reaction is 1-(5-phospho-beta-D-ribosyl)-ATP + H2O = 1-(5-phospho-beta-D-ribosyl)-5'-AMP + diphosphate + H(+). Its pathway is amino-acid biosynthesis; L-histidine biosynthesis; L-histidine from 5-phospho-alpha-D-ribose 1-diphosphate: step 2/9. The protein is Phosphoribosyl-ATP pyrophosphatase of Teredinibacter turnerae (strain ATCC 39867 / T7901).